Here is a 428-residue protein sequence, read N- to C-terminus: Light-independent protochlorophyllide reductase subunit N (428 aa).

[4Fe-4S] cluster-binding residues include Cys-31, Cys-56, and Cys-117.

Belongs to the BchN/ChlN family. Protochlorophyllide reductase is composed of three subunits; BchL, BchN and BchB. Forms a heterotetramer of two BchB and two BchN subunits. Requires [4Fe-4S] cluster as cofactor.

It carries out the reaction chlorophyllide a + oxidized 2[4Fe-4S]-[ferredoxin] + 2 ADP + 2 phosphate = protochlorophyllide a + reduced 2[4Fe-4S]-[ferredoxin] + 2 ATP + 2 H2O. It participates in porphyrin-containing compound metabolism; bacteriochlorophyll biosynthesis (light-independent). Functionally, component of the dark-operative protochlorophyllide reductase (DPOR) that uses Mg-ATP and reduced ferredoxin to reduce ring D of protochlorophyllide (Pchlide) to form chlorophyllide a (Chlide). This reaction is light-independent. The NB-protein (BchN-BchB) is the catalytic component of the complex. The protein is Light-independent protochlorophyllide reductase subunit N of Rhodopseudomonas palustris (strain BisB18).